The chain runs to 1342 residues: DNA-directed RNA polymerase subunit beta (1342 aa).

This sequence belongs to the RNA polymerase beta chain family. In terms of assembly, the RNAP catalytic core consists of 2 alpha, 1 beta, 1 beta' and 1 omega subunit. When a sigma factor is associated with the core the holoenzyme is formed, which can initiate transcription.

The catalysed reaction is RNA(n) + a ribonucleoside 5'-triphosphate = RNA(n+1) + diphosphate. DNA-dependent RNA polymerase catalyzes the transcription of DNA into RNA using the four ribonucleoside triphosphates as substrates. The protein is DNA-directed RNA polymerase subunit beta of Pasteurella multocida (strain Pm70).